The chain runs to 432 residues: ATP-dependent RNA helicase RhlB (432 aa).

The Q motif signature appears at 9-37; the sequence is QRFADLPLHAEVIQALNENGFEFCTPIQA. Positions 40–219 constitute a Helicase ATP-binding domain; sequence LPVLLKAKDI…YDHMNDPEKV (180 aa). 53-60 is an ATP binding site; that stretch reads AQTGTGKT. The DEAD box signature appears at 165–168; it reads DEAD. The region spanning 243 to 390 is the Helicase C-terminal domain; the sequence is KMRLLLTLME…VSRYDREALL (148 aa). Residues 395–432 are disordered; it reads TPVKIHRKHPTSRTRDGAKGAHRSGGARPPRHRTRRPS. The segment covering 423 to 432 has biased composition (basic residues); it reads PPRHRTRRPS.

Belongs to the DEAD box helicase family. RhlB subfamily. Component of the RNA degradosome, which is a multiprotein complex involved in RNA processing and mRNA degradation.

The protein resides in the cytoplasm. The enzyme catalyses ATP + H2O = ADP + phosphate + H(+). In terms of biological role, DEAD-box RNA helicase involved in RNA degradation. Has RNA-dependent ATPase activity and unwinds double-stranded RNA. In Shewanella denitrificans (strain OS217 / ATCC BAA-1090 / DSM 15013), this protein is ATP-dependent RNA helicase RhlB.